A 171-amino-acid chain; its full sequence is CDP-archaeol synthase (171 aa).

The next 5 membrane-spanning stretches (helical) occupy residues 7–27, 54–74, 84–104, 115–135, and 141–161; these read IFWA…PVLV, GFIG…FITP, VKLA…GSFI, PAIG…AYPV, and GQII…NYFA.

It belongs to the CDP-archaeol synthase family. It depends on Mg(2+) as a cofactor.

Its subcellular location is the cell membrane. It catalyses the reaction 2,3-bis-O-(geranylgeranyl)-sn-glycerol 1-phosphate + CTP + H(+) = CDP-2,3-bis-O-(geranylgeranyl)-sn-glycerol + diphosphate. The protein operates within membrane lipid metabolism; glycerophospholipid metabolism. Catalyzes the formation of CDP-2,3-bis-(O-geranylgeranyl)-sn-glycerol (CDP-archaeol) from 2,3-bis-(O-geranylgeranyl)-sn-glycerol 1-phosphate (DGGGP) and CTP. This reaction is the third ether-bond-formation step in the biosynthesis of archaeal membrane lipids. The polypeptide is CDP-archaeol synthase (Thermococcus kodakarensis (strain ATCC BAA-918 / JCM 12380 / KOD1) (Pyrococcus kodakaraensis (strain KOD1))).